The primary structure comprises 293 residues: uncharacterized protein (293 aa).

Disordered regions lie at residues 1–23 (MGWPPAQKPEDSKEEHGGPAQTD) and 52–83 (ELQSYSHTSESPVETKTPTTSSEEQDEQSELS). Basic and acidic residues predominate over residues 8–17 (KPEDSKEEHG). A compositionally biased stretch (polar residues) spans 52–71 (ELQSYSHTSESPVETKTPTT).

This is an uncharacterized protein from Mus musculus (Mouse).